A 476-amino-acid polypeptide reads, in one-letter code: Cytochrome c oxidase subunit 1 (476 aa).

Residues 19-39 (LYYLWFSFLFGIYGFLLSVIL) traverse the membrane as a helical segment. Glu42 serves as a coordination point for Ca(2+). The next 8 membrane-spanning stretches (helical) occupy residues 61 to 81 (MIFT…GLFG), 105 to 125 (ISLL…AAEF), 144 to 164 (LSPV…IASI), 194 to 214 (LIIT…GVLM), 240 to 260 (LLWF…FGII), 278 to 298 (MILA…HHMY), 309 to 329 (FFTS…FNWL), and 345 to 365 (LLSL…VILG). Residue His66 coordinates Fe(II)-heme a. His246 serves as a coordination point for Cu cation. Residues 246-250 (HPEVY) constitute a cross-link (1'-histidyl-3'-tyrosine (His-Tyr)). Tyr250 serves as a coordination point for O2. Cu cation contacts are provided by His295 and His296. Mg(2+)-binding residues include His374 and Asp375. 2 helical membrane-spanning segments follow: residues 379 to 399 (VIAH…FTSV) and 415 to 435 (TIIV…FLPM). His382 is a binding site for heme a3. Fe(II)-heme a is bound at residue His384. Pro448 is a binding site for Ca(2+). The chain crosses the membrane as a helical span at residues 455–475 (NGWNMICSIGSTMTLFGLLIF).

It belongs to the heme-copper respiratory oxidase family. Component of the cytochrome c oxidase (complex IV, CIV), a multisubunit enzyme composed of a catalytic core of 3 subunits and several supernumerary subunits. The complex exists as a monomer or a dimer and forms supercomplexes (SCs) in the inner mitochondrial membrane with ubiquinol-cytochrome c oxidoreductase (cytochrome b-c1 complex, complex III, CIII). The cofactor is heme. Requires Cu cation as cofactor.

It is found in the mitochondrion inner membrane. The catalysed reaction is 4 Fe(II)-[cytochrome c] + O2 + 8 H(+)(in) = 4 Fe(III)-[cytochrome c] + 2 H2O + 4 H(+)(out). It participates in energy metabolism; oxidative phosphorylation. In terms of biological role, component of the cytochrome c oxidase, the last enzyme in the mitochondrial electron transport chain which drives oxidative phosphorylation. The respiratory chain contains 3 multisubunit complexes succinate dehydrogenase (complex II, CII), ubiquinol-cytochrome c oxidoreductase (cytochrome b-c1 complex, complex III, CIII) and cytochrome c oxidase (complex IV, CIV), that cooperate to transfer electrons derived from NADH and succinate to molecular oxygen, creating an electrochemical gradient over the inner membrane that drives transmembrane transport and the ATP synthase. Cytochrome c oxidase is the component of the respiratory chain that catalyzes the reduction of oxygen to water. Electrons originating from reduced cytochrome c in the intermembrane space (IMS) are transferred via the dinuclear copper A center (CU(A)) of subunit 2 and heme A of subunit 1 to the active site in subunit 1, a binuclear center (BNC) formed by heme A3 and copper B (CU(B)). The BNC reduces molecular oxygen to 2 water molecules using 4 electrons from cytochrome c in the IMS and 4 protons from the mitochondrial matrix. This Plasmodium chabaudi protein is Cytochrome c oxidase subunit 1 (COI).